An 857-amino-acid polypeptide reads, in one-letter code: Autoinducer 2 sensor kinase/phosphatase LuxQ (857 aa).

A run of 2 helical transmembrane segments spans residues 20–40 (IIFL…YYFS) and 283–303 (LGLA…RSWI). One can recognise a Histidine kinase domain in the interval 490 to 712 (KMSHEIRTPL…TFYLSIPVEK (223 aa)). Position 493 is a phosphohistidine; by autocatalysis (His493). A Response regulatory domain is found at 735 to 850 (KVLLVEDNHT…ELHDELLHFK (116 aa)). A 4-aspartylphosphate modification is found at Asp784.

Binds the complex formed by the autoinducer and LuxP.

Its subcellular location is the cell inner membrane. It carries out the reaction ATP + protein L-histidine = ADP + protein N-phospho-L-histidine.. Its function is as follows. At low cell density, in absence of autoinducer has a kinase activity, and autophosphorylates on a histidine residue. The phosphoryl group is then transferred to an aspartate residue in the response regulator domain. The phosphoryl group is transferred to LuxU, and ultimately to LuxO. At high cell density, in the presence of autoinducer, the kinase activity is inactivated, and the response regulator domain has a phosphatase activity. The sequence is that of Autoinducer 2 sensor kinase/phosphatase LuxQ (luxQ) from Vibrio vulnificus (strain CMCP6).